The following is a 160-amino-acid chain: NADH-quinone oxidoreductase subunit B (160 aa).

Residues Cys-37, Cys-38, Cys-102, and Cys-132 each coordinate [4Fe-4S] cluster.

The protein belongs to the complex I 20 kDa subunit family. NDH-1 is composed of 14 different subunits. Subunits NuoB, C, D, E, F, and G constitute the peripheral sector of the complex. The cofactor is [4Fe-4S] cluster.

It localises to the cell inner membrane. It catalyses the reaction a quinone + NADH + 5 H(+)(in) = a quinol + NAD(+) + 4 H(+)(out). Its function is as follows. NDH-1 shuttles electrons from NADH, via FMN and iron-sulfur (Fe-S) centers, to quinones in the respiratory chain. Couples the redox reaction to proton translocation (for every two electrons transferred, four hydrogen ions are translocated across the cytoplasmic membrane), and thus conserves the redox energy in a proton gradient. This is NADH-quinone oxidoreductase subunit B from Cupriavidus metallidurans (strain ATCC 43123 / DSM 2839 / NBRC 102507 / CH34) (Ralstonia metallidurans).